Reading from the N-terminus, the 361-residue chain is Queuine tRNA-ribosyltransferase (361 aa).

Catalysis depends on aspartate 92, which acts as the Proton acceptor. Residues 92–96 (DSGGF), aspartate 146, glutamine 189, and glycine 216 contribute to the substrate site. Residues 247-253 (GVGKPAD) are RNA binding. Residue aspartate 266 is the Nucleophile of the active site. Residues 271 to 275 (TRSGR) form an RNA binding; important for wobble base 34 recognition region. 4 residues coordinate Zn(2+): cysteine 304, cysteine 306, cysteine 309, and histidine 335.

This sequence belongs to the queuine tRNA-ribosyltransferase family. Homodimer. Within each dimer, one monomer is responsible for RNA recognition and catalysis, while the other monomer binds to the replacement base PreQ1. Zn(2+) is required as a cofactor.

It carries out the reaction 7-aminomethyl-7-carbaguanine + guanosine(34) in tRNA = 7-aminomethyl-7-carbaguanosine(34) in tRNA + guanine. The protein operates within tRNA modification; tRNA-queuosine biosynthesis. Catalyzes the base-exchange of a guanine (G) residue with the queuine precursor 7-aminomethyl-7-deazaguanine (PreQ1) at position 34 (anticodon wobble position) in tRNAs with GU(N) anticodons (tRNA-Asp, -Asn, -His and -Tyr). Catalysis occurs through a double-displacement mechanism. The nucleophile active site attacks the C1' of nucleotide 34 to detach the guanine base from the RNA, forming a covalent enzyme-RNA intermediate. The proton acceptor active site deprotonates the incoming PreQ1, allowing a nucleophilic attack on the C1' of the ribose to form the product. After dissociation, two additional enzymatic reactions on the tRNA convert PreQ1 to queuine (Q), resulting in the hypermodified nucleoside queuosine (7-(((4,5-cis-dihydroxy-2-cyclopenten-1-yl)amino)methyl)-7-deazaguanosine). The polypeptide is Queuine tRNA-ribosyltransferase (Rickettsia felis (strain ATCC VR-1525 / URRWXCal2) (Rickettsia azadi)).